A 306-amino-acid chain; its full sequence is UDP-3-O-acyl-N-acetylglucosamine deacetylase (306 aa).

Zn(2+) is bound by residues H79, H239, and D243. H266 (proton donor) is an active-site residue.

It belongs to the LpxC family. Zn(2+) is required as a cofactor.

It carries out the reaction a UDP-3-O-[(3R)-3-hydroxyacyl]-N-acetyl-alpha-D-glucosamine + H2O = a UDP-3-O-[(3R)-3-hydroxyacyl]-alpha-D-glucosamine + acetate. It functions in the pathway glycolipid biosynthesis; lipid IV(A) biosynthesis; lipid IV(A) from (3R)-3-hydroxytetradecanoyl-[acyl-carrier-protein] and UDP-N-acetyl-alpha-D-glucosamine: step 2/6. Catalyzes the hydrolysis of UDP-3-O-myristoyl-N-acetylglucosamine to form UDP-3-O-myristoylglucosamine and acetate, the committed step in lipid A biosynthesis. This Glaesserella parasuis serovar 5 (strain SH0165) (Haemophilus parasuis) protein is UDP-3-O-acyl-N-acetylglucosamine deacetylase.